The chain runs to 211 residues: Hypoxanthine-guanine phosphoribosyltransferase (211 aa).

Residues 1-20 (MSNSAKSPSGPVGDEGRRNY) are disordered. GMP is bound by residues lysine 66, 125–133 (EDIVDSAIT), lysine 157, and aspartate 185. The active-site Proton acceptor is the aspartate 129. Aspartate 185 provides a ligand contact to Mg(2+).

Belongs to the purine/pyrimidine phosphoribosyltransferase family. The cofactor is Mg(2+).

It is found in the cytoplasm. The enzyme catalyses IMP + diphosphate = hypoxanthine + 5-phospho-alpha-D-ribose 1-diphosphate. The catalysed reaction is GMP + diphosphate = guanine + 5-phospho-alpha-D-ribose 1-diphosphate. The protein operates within purine metabolism; IMP biosynthesis via salvage pathway; IMP from hypoxanthine: step 1/1. Its function is as follows. Converts guanine to guanosine monophosphate, and hypoxanthine to inosine monophosphate. Transfers the 5-phosphoribosyl group from 5-phosphoribosylpyrophosphate onto the purine. Plays a central role in the generation of purine nucleotides through the purine salvage pathway. The protein is Hypoxanthine-guanine phosphoribosyltransferase of Leishmania donovani.